Reading from the N-terminus, the 167-residue chain is Mediator of RNA polymerase II transcription subunit 10 (167 aa).

The segment at 54–92 (STHTKPHPPPPPPPQPTDPTTAAAPALRDNPDPPLSSIQ) is disordered. Residues 60-70 (HPPPPPPPQPT) show a composition bias toward pro residues.

Belongs to the Mediator complex subunit 10 family. Component of the Mediator complex.

Its subcellular location is the nucleus. Component of the Mediator complex, a coactivator involved in the regulated transcription of nearly all RNA polymerase II-dependent genes. Mediator functions as a bridge to convey information from gene-specific regulatory proteins to the basal RNA polymerase II transcription machinery. Mediator is recruited to promoters by direct interactions with regulatory proteins and serves as a scaffold for the assembly of a functional preinitiation complex with RNA polymerase II and the general transcription factors. The sequence is that of Mediator of RNA polymerase II transcription subunit 10 (nut2) from Aspergillus clavatus (strain ATCC 1007 / CBS 513.65 / DSM 816 / NCTC 3887 / NRRL 1 / QM 1276 / 107).